The chain runs to 624 residues: Ceramide transfer protein (624 aa).

A compositionally biased stretch (polar residues) spans 1 to 11 (MSDNQSWNSSG). Residues 1-24 (MSDNQSWNSSGSEEDPETESGPPV) are disordered. The PH domain occupies 23–117 (PVERCGVLSK…WIDAIEQHKT (95 aa)). A Phosphoserine modification is found at Ser126. Ser132 bears the Phosphoserine; by PKD mark. Phosphoserine is present on Ser135. Positions 263-303 (IELMVKREDSWQKRLDKETEKKRRTEEAYKNAMTELKKKSH) form a coiled coil. Ser315 is modified (phosphoserine). The FFAT signature appears at 321–327 (EFFDAVE). Tyr372 carries the post-translational modification Phosphotyrosine. Phosphoserine is present on residues Ser373, Ser377, and Ser380. Residues 389 to 618 (DVHRFSSQVE…FTSYVQEKTA (230 aa)) form the START domain. Residues Glu472, Gln493, Asn530, and Tyr579 each coordinate an N-acylsphing-4-enine.

As to quaternary structure, interacts with VAPA and VAPB. Interaction with VAPB is less efficient than with VAPA. Interacts (via FFAT motif) with MOSPD2 (via MSP domain). Phosphorylation on Ser-132 decreases the affinity toward phosphatidylinositol 4-phosphate at Golgi membranes and reduces ceramide transfer activity. Inactivated by hyperphosphorylation of serine residues by CSNK1G2/CK1 that triggers dissociation from the Golgi complex, thus down-regulating ER-to-Golgi transport of ceramide and sphingomyelin synthesis. Widely expressed.

It is found in the cytoplasm. The protein resides in the golgi apparatus. The protein localises to the endoplasmic reticulum. The enzyme catalyses N-hexadecanoylsphing-4-enine(in) = N-hexadecanoylsphing-4-enine(out). Functionally, shelters ceramides and diacylglycerol lipids inside its START domain and mediates the intracellular trafficking of ceramides and diacylglycerol lipids in a non-vesicular manner. In Homo sapiens (Human), this protein is Ceramide transfer protein.